Here is a 236-residue protein sequence, read N- to C-terminus: 7-cyano-7-deazaguanine synthase (236 aa).

Position 7-17 (7-17 (CSGGLDSVSLA)) interacts with ATP. Residues C185, C193, C196, and C199 each coordinate Zn(2+).

Belongs to the QueC family. The cofactor is Zn(2+).

The catalysed reaction is 7-carboxy-7-deazaguanine + NH4(+) + ATP = 7-cyano-7-deazaguanine + ADP + phosphate + H2O + H(+). The protein operates within purine metabolism; 7-cyano-7-deazaguanine biosynthesis. In terms of biological role, catalyzes the ATP-dependent conversion of 7-carboxy-7-deazaguanine (CDG) to 7-cyano-7-deazaguanine (preQ(0)). The chain is 7-cyano-7-deazaguanine synthase from Rhizobium etli (strain CIAT 652).